A 299-amino-acid polypeptide reads, in one-letter code: RGG repeats nuclear RNA binding protein A (299 aa).

Residues 1–21 (RGGGRGGPRGGGRGRGPGRGR) show a composition bias toward gly residues. Disordered regions lie at residues 1–173 (RGGG…KEMT) and 232–299 (EAVE…LVAK). Positions 45 to 60 (RVQEDGESGKLSERRG) are enriched in basic and acidic residues. Residues 61-78 (GYGGPRGGFHGGRRGGFN) are compositionally biased toward gly residues. Basic and acidic residues-rich tracts occupy residues 86 to 98 (EGERPRRVFDRRS) and 134 to 146 (DGEKIVEAEKEAG). The short motif at 88–98 (ERPRRVFDRRS) is the Arginine-rich RNA-binding motif E-R-P-R-R-X-[F/Y]-[E/D]-R-R-S element. Over residues 267–278 (RGRGGFGGGVGG) the composition is skewed to gly residues.

The protein belongs to the SERBP1-HABP4 family. Expressed in seedlings but not in roots.

It localises to the nucleus. It is found in the cytoplasm. Its subcellular location is the perinuclear region. Its function is as follows. Ribosome-binding protein that acts as a regulator of mRNA translation by promoting ribosome inactivation. Binds RNA. The polypeptide is RGG repeats nuclear RNA binding protein A (Nicotiana tabacum (Common tobacco)).